The chain runs to 412 residues: Probable serine/threonine-protein kinase PBL4 (412 aa).

Residue glycine 2 is the site of N-myristoyl glycine attachment. The S-palmitoyl cysteine moiety is linked to residue cysteine 4. The segment at 14-40 is disordered; it reads RESPYRGSSRISAKRSQSSRLSSLTIQ. Residues 21–40 show a composition bias toward low complexity; the sequence is SSRISAKRSQSSRLSSLTIQ. The residue at position 72 (threonine 72) is a Phosphothreonine. Residues 83 to 369 enclose the Protein kinase domain; the sequence is FRPDSVIGEG…STLEELEMTL (287 aa). ATP-binding positions include 89-97 and lysine 121; that span reads IGEGGFGYV. A Phosphotyrosine modification is found at tyrosine 167. The Proton acceptor role is filled by aspartate 215. Phosphoserine occurs at positions 219 and 249. Threonine 250 and threonine 255 each carry phosphothreonine. Position 263 is a phosphotyrosine (tyrosine 263).

Belongs to the protein kinase superfamily. Ser/Thr protein kinase family.

The protein resides in the cell membrane. It catalyses the reaction L-seryl-[protein] + ATP = O-phospho-L-seryl-[protein] + ADP + H(+). It carries out the reaction L-threonyl-[protein] + ATP = O-phospho-L-threonyl-[protein] + ADP + H(+). Its function is as follows. May be involved in plant defense signaling. This chain is Probable serine/threonine-protein kinase PBL4, found in Arabidopsis thaliana (Mouse-ear cress).